A 48-amino-acid chain; its full sequence is MGNDAFKLSSADRGDITINNESGHLIVNTAILSGDIVTLRGGEIRLVL.

The chain is Protein YodE from Escherichia coli (strain K12).